The chain runs to 5146 residues: SCO-spondin (5146 aa).

The signal sequence occupies residues 1 to 17; sequence MLLPALLFGAAWALANG. An EMI domain is found at 18-94; that stretch reads RWCEQTETVL…ACCPGWGGTH (77 aa). Residues Asn-80, Asn-122, and Asn-153 are each glycosylated (N-linked (GlcNAc...) asparagine). Residues 185 to 356 form the VWFD 1 domain; it reads ATCATWSGFH…RLPDSELGCL (172 aa). Cystine bridges form between Cys-187/Cys-317, Cys-209/Cys-355, and Cys-231/Cys-237. Asn-255 carries N-linked (GlcNAc...) asparagine glycosylation. The TIL 1 domain occupies 464 to 519; sequence CPGGQLYSDCASACPPSCSAVGEGSEWSCGEECVSGCECPPGLFWDGALCVPAARC. The region spanning 557-730 is the VWFD 2 domain; sequence AECAVGGDGH…FQVAGGGTCS (174 aa). Disulfide bonds link Cys-559–Cys-692 and Cys-583–Cys-729. Residue Asn-814 is glycosylated (N-linked (GlcNAc...) asparagine). The region spanning 822–875 is the TIL 2 domain; the sequence is CPGGQEYQECAPACDRNCGEPEDCGELDNCVAGCNCPLGLLWDPEGQCVPPNLC. A glycan (N-linked (GlcNAc...) asparagine) is linked at Asn-906. The VWFD 3 domain occupies 1008–1178; the sequence is GRCRASGAPH…HSWRLGPLCP (171 aa). Cystine bridges form between Cys-1010–Cys-1142, Cys-1032–Cys-1177, and Cys-1053–Cys-1060. In terms of domain architecture, TIL 3 spans 1271-1327; sequence CERGQVYEACGPTCPATCHDHRPEPGWPCRAVACVEGCFCPEGTLLHGGVCLEPAAC. Asn-1349 is a glycosylation site (N-linked (GlcNAc...) asparagine). LDL-receptor class A domains lie at 1372–1409, 1412–1447, 1448–1484, 1488–1526, 1561–1597, and 1599–1638; these read GCAE…EGCA, VCGE…EQGC, PCPQ…ESCL, DCAP…GHCP, PCGP…SGCD, and PCAP…GACE. 18 cysteine pairs are disulfide-bonded: Cys-1373–Cys-1386, Cys-1380–Cys-1399, Cys-1393–Cys-1408, Cys-1413–Cys-1425, Cys-1420–Cys-1438, Cys-1432–Cys-1447, Cys-1449–Cys-1461, Cys-1456–Cys-1474, Cys-1468–Cys-1483, Cys-1489–Cys-1501, Cys-1496–Cys-1514, Cys-1508–Cys-1525, Cys-1562–Cys-1574, Cys-1569–Cys-1587, Cys-1581–Cys-1596, Cys-1600–Cys-1613, Cys-1607–Cys-1626, and Cys-1620–Cys-1637. An N-linked (GlcNAc...) asparagine glycan is attached at Asn-1647. In terms of domain architecture, LDL-receptor class A 7 spans 1652–1690; it reads PCPEYSCPDGLCIGFQQVCDGQPDCELAGTAGPSPEEQG. TSP type-1 domains follow at residues 1691–1745 and 1747–1805; these read CGAW…AACP and DGVW…DGCP. 3 disulfides stabilise this stretch: Cys-1703-Cys-1739, Cys-1707-Cys-1744, and Cys-1718-Cys-1729. A glycan (N-linked (GlcNAc...) asparagine) is linked at Asn-1806. A TIL 4 domain is found at 1809-1865; the sequence is CSGELVFHACVPCPLTCDDISGQATCPPDRPCGGPGCWCPAGQVLGAQGRCVWPRQC. EGF-like domains follow at residues 1821–1860 and 1861–1898; these read CPLT…GRCV and WPRQ…RRCQ. In terms of domain architecture, TSP type-1 3 spans 1906 to 1962; that stretch reads NCGWSAWSPWAECLGPCGSRSVQWSFRSPNNPRPAGRGHQCRGLHRKARRCQTEPCE. Intrachain disulfides connect Cys-1907–Cys-1946, Cys-1918–Cys-1922, and Cys-1956–Cys-1961. The region spanning 1962–2022 is the VWFC 1 domain; it reads EGCEQDGRVH…GVGESCCHCV (61 aa). N-linked (GlcNAc...) asparagine glycosylation is found at Asn-2027 and Asn-2127. Cystine bridges form between Cys-2062/Cys-2220, Cys-2226/Cys-2238, Cys-2233/Cys-2251, and Cys-2245/Cys-2260. Residues 2062 to 2220 enclose the F5/8 type C domain; that stretch reads CYSPLGLARL…GPLRVELLGC (159 aa). Positions 2225 to 2261 constitute an LDL-receptor class A 8 domain; sequence LCLGVGHRCVSGECAPRGAPCDGVEDCKDGSDEEGCV. Residues 2262–2346 are disordered; sequence TPPAGAGRIE…TPTSQPEAQA (85 aa). Polar residues-rich tracts occupy residues 2273 to 2284 and 2331 to 2343; these read TAWSSAPSSAQP and GSVQ…SQPE. 2 LDL-receptor class A domains span residues 2382–2418 and 2442–2478; these read QCSP…RPCA and LCSP…NGCV. Cystine bridges form between Cys-2383/Cys-2395, Cys-2390/Cys-2408, Cys-2402/Cys-2417, Cys-2443/Cys-2455, Cys-2450/Cys-2468, Cys-2462/Cys-2477, Cys-2480/Cys-2516, Cys-2491/Cys-2495, Cys-2526/Cys-2531, Cys-2546/Cys-2583, Cys-2550/Cys-2588, and Cys-2561/Cys-2573. TSP type-1 domains follow at residues 2479-2532 and 2534-2589; these read DCGL…QACP and AGAW…QPCA. Residues 2611–2654 enclose the TIL 5 domain; sequence VPPCPPSCLDPEANRSCSGLCLEGCRCPPGLLLQDAGCLPLSEC. 2 N-linked (GlcNAc...) asparagine glycosylation sites follow: Asn-2624 and Asn-2673. TSP type-1 domains are found at residues 2694 to 2748, 2751 to 2807, and 2809 to 2862; these read PCGW…SACG, VPGW…PVCL, and LGVW…QPCT. 9 disulfides stabilise this stretch: Cys-2695-Cys-2733, Cys-2706-Cys-2710, Cys-2743-Cys-2747, Cys-2763-Cys-2801, Cys-2767-Cys-2806, Cys-2783-Cys-2791, Cys-2821-Cys-2856, Cys-2825-Cys-2861, and Cys-2836-Cys-2846. 2 N-linked (GlcNAc...) asparagine glycosylation sites follow: Asn-2915 and Asn-2946. TSP type-1 domains are found at residues 2964–3019 and 3020–3071; these read ACGW…RPCG and GPAG…GVCP. 3 disulfides stabilise this stretch: Cys-2965/Cys-3003, Cys-2976/Cys-2980, and Cys-3013/Cys-3018. Residue Asn-3041 is glycosylated (N-linked (GlcNAc...) asparagine). Residues 3070–3122 enclose the TIL 6 domain; that stretch reads CPPGKRWLDCAQGPASCAELSAPRGADQPCHPGCYCPSGMLLLNNACVPTQDC. N-linked (GlcNAc...) asparagine glycans are attached at residues Asn-3143 and Asn-3153. TSP type-1 domains lie at 3163–3230 and 3232–3287; these read QPTW…PECD and AGGW…LPCP. Intrachain disulfides connect Cys-3175-Cys-3224, Cys-3179-Cys-3229, Cys-3190-Cys-3214, Cys-3244-Cys-3281, Cys-3248-Cys-3286, and Cys-3259-Cys-3271. Asn-3290 carries an N-linked (GlcNAc...) asparagine glycan. Residues 3295–3345 enclose the TIL 7 domain; the sequence is EGAEYSACGPPCPRSCDDLVHCVWHCQPGCYCPPGQVLSADGTVHVQPGHC. 2 consecutive TSP type-1 domains span residues 3388-3450 and 3452-3507; these read PGAW…PECP and DGAW…TQCT. 6 disulfides stabilise this stretch: Cys-3400-Cys-3443, Cys-3404-Cys-3449, Cys-3415-Cys-3427, Cys-3464-Cys-3499, Cys-3467-Cys-3506, and Cys-3477-Cys-3489. 3 N-linked (GlcNAc...) asparagine glycosylation sites follow: Asn-3502, Asn-3580, and Asn-3607. A TSP type-1 15 domain is found at 3626–3674; sequence LGLWGSWGPWEDCSVSCGGGEQLRFRRCPRPPCPGPARQSRTCRTQVCR. Disulfide bonds link Cys-3638–Cys-3668, Cys-3642–Cys-3673, and Cys-3653–Cys-3658. Asn-3783 carries N-linked (GlcNAc...) asparagine glycosylation. TSP type-1 domains are found at residues 3802-3858, 3872-3924, 3938-3994, and 3996-4051; these read AGGF…PECP, PGGW…PSCT, NCSW…RACP, and PGGW…TPCE. 3 disulfide bridges follow: Cys-3814–Cys-3852, Cys-3818–Cys-3857, and Cys-3830–Cys-3842. N-linked (GlcNAc...) asparagine glycans are attached at residues Asn-3906 and Asn-3938. 6 cysteine pairs are disulfide-bonded: Cys-3939–Cys-3975, Cys-3950–Cys-3954, Cys-3988–Cys-3993, Cys-4008–Cys-4045, Cys-4012–Cys-4050, and Cys-4023–Cys-4035. The 56-residue stretch at 4054–4109 folds into the TIL 8 domain; that stretch reads CPAGMEVVSCANRCPRRCSDLQEGIVCQEDQACQQGCRCPEGSLEQDGGCVPLGHC. The VWFC 2 domain occupies 4101–4168; it reads GGCVPLGHCE…AWSPCSRSCG (68 aa). Residue Asn-4131 is glycosylated (N-linked (GlcNAc...) asparagine). 4 consecutive TSP type-1 domains span residues 4151-4204, 4245-4300, 4302-4358, and 4360-4414; these read HCAW…SPCP, LGAW…WPCP, LPDT…GPCL, and ECVW…GNCS. 6 disulfides stabilise this stretch: Cys-4152-Cys-4188, Cys-4163-Cys-4167, Cys-4198-Cys-4203, Cys-4257-Cys-4294, Cys-4261-Cys-4299, and Cys-4272-Cys-4284. The N-linked (GlcNAc...) asparagine glycan is linked to Asn-4341. Cystine bridges form between Cys-4361-Cys-4398, Cys-4372-Cys-4374, and Cys-4408-Cys-4413. Asn-4412 carries an N-linked (GlcNAc...) asparagine glycan. Residues 4418 to 4473 enclose the TIL 9 domain; the sequence is CAPPFEFQACGSPCTGLCATYLSPWLCQDLPPCQPGCYCPEGLLEQAGGCVPPEQC. In terms of domain architecture, TSP type-1 24 spans 4610 to 4661; that stretch reads LCQWGPWGAWSPCQVPCSGGFRLRWREAGIPPGGGCRGPWAQTESCNMGPCP. Disulfide bonds link Cys-4611-Cys-4645, Cys-4622-Cys-4626, and Cys-4655-Cys-4660. The TIL 10 domain occupies 4675 to 4721; that stretch reads DCANQCPRSCVDLWDRVECLQGPCRPGCRCPPGQLVQDGHCVPVSSC. 4 N-linked (GlcNAc...) asparagine glycosylation sites follow: Asn-4729, Asn-4746, Asn-4751, and Asn-4772. The 54-residue stretch at 4761–4814 folds into the TSP type-1 25 domain; it reads CPTLGPWSAWSNCSAPCGGGTTKRHRSCKEGPGVTPCQAQDMEQQQDCNLQPCP. Cystine bridges form between Cys-4773–Cys-4808, Cys-4777–Cys-4813, and Cys-4788–Cys-4797. The TIL 11 domain maps to 4816–4870; it reads CPPGQVLSACAVSCPRLCSHLQPGTPCMQEPCQLGCDCPRGQLLHNGTCVPPAEC. Asn-4861, Asn-4901, Asn-4947, and Asn-4954 each carry an N-linked (GlcNAc...) asparagine glycan. Positions 4983–5041 constitute a VWFC 3 domain; it reads CECWHHGRPHPPGSEWQKACESCRCVSGESICTQHCPPLTCAQGETAVQEPGGCCPTCR. 4 disulfide bridges follow: Cys-5052/Cys-5100, Cys-5066/Cys-5117, Cys-5076/Cys-5133, and Cys-5080/Cys-5135. The 88-residue stretch at 5052-5139 folds into the CTCK domain; the sequence is CRHLTELRNL…IHSCQCSACQ (88 aa). The N-linked (GlcNAc...) asparagine glycan is linked to Asn-5060.

The protein belongs to the thrombospondin family. Subcommissural organ. Located at the boundary of the diencephalon and mesencephalon beneath the posterior commissure at the point where the axons cross the midline.

The protein resides in the secreted. Its subcellular location is the extracellular space. Its function is as follows. Involved in the modulation of neuronal aggregation. May be involved in developmental events during the formation of the central nervous system. The protein is SCO-spondin (SSPO) of Bos taurus (Bovine).